The chain runs to 106 residues: UPF0145 protein Pput_2816 (106 aa).

This sequence belongs to the UPF0145 family.

The polypeptide is UPF0145 protein Pput_2816 (Pseudomonas putida (strain ATCC 700007 / DSM 6899 / JCM 31910 / BCRC 17059 / LMG 24140 / F1)).